A 370-amino-acid polypeptide reads, in one-letter code: Leucine-rich repeat-containing protein 19 (370 aa).

An N-terminal signal peptide occupies residues 1–24; sequence MKVTGITILFWPLSMILLSDKIQS. Residues 25-270 lie on the Extracellular side of the membrane; the sequence is SKREVQCNFT…SEHEPLGKSW (246 aa). N-linked (GlcNAc...) asparagine glycans are attached at residues asparagine 32, asparagine 37, asparagine 62, and asparagine 95. 5 LRR repeats span residues 46–71, 72–95, 96–119, 120–143, and 145–168; these read KKDVTILDLSYNQITLNGTDTRVLQT, YFLLTELYLIENKVTILHNNGFGN, LSSLEILNICRNSIYVIQQGAFLG, LNKLKQLYLCQNKIEQLNADVFVP, and RSLKLLNLQGNLISYLDVPPLFHL. The 52-residue stretch at 176 to 227 folds into the LRRCT domain; sequence NLWNCSCSLFNLQNWLNTSNVTLENENITMCSYPNSLQSYNIKTVPHKAECH. N-linked (GlcNAc...) asparagine glycosylation is found at asparagine 179, asparagine 192, asparagine 195, asparagine 202, asparagine 251, and asparagine 256. Residues 271–291 form a helical membrane-spanning segment; that stretch reads AFLVGVVVTVLTTSLLIFIAI. Over 292–370 the chain is Cytoplasmic; that stretch reads KCPIWYNILL…IDIHELCEEN (79 aa).

As to quaternary structure, interacts with TRAF2 and TRAF6. In terms of tissue distribution, expressed in renal collecting duct epithelial cells.

The protein localises to the membrane. With respect to regulation, activated by TLR ligands such as LPS, bacterial DNA and peptidoglycan. Functionally, pathogen-recognition receptor which mediates the activation of TRAF2- and TRAF6 NF-kappa-B signaling pathways and induces the expression of pro-inflammatory cytokines. In kidney, prevents infection by uropathogenic bacteria by inducing the production of cytokines, chemokines and antimicrobial substances. In gut, involved in host-microbiota interactions, plays a critical role in promoting the recruitment of immune cells and intestinal inflammation. In Homo sapiens (Human), this protein is Leucine-rich repeat-containing protein 19.